Here is a 928-residue protein sequence, read N- to C-terminus: ATP-dependent DNA helicase PIF5 (928 aa).

A mitochondrion-targeting transit peptide spans Met1–Ser49. 2 disordered regions span residues Arg29–Ile141 and Leu176–Ala231. Residues Ala52–Gly61 are compositionally biased toward basic and acidic residues. ATP is bound at residue Gly264–Ser271. Disordered stretches follow at residues Pro389 to Lys421, Lys481 to Glu513, Ile545 to Met572, and Ser585 to Trp607. The span at Asn550 to Val566 shows a compositional bias: polar residues. The DNA-binding element occupies Gln858 to Phe877. The segment at Glu898 to Glu928 is disordered.

This sequence belongs to the helicase family. PIF1 subfamily. In terms of assembly, monomer. Mg(2+) serves as cofactor.

The protein localises to the mitochondrion. The enzyme catalyses Couples ATP hydrolysis with the unwinding of duplex DNA at the replication fork by translocating in the 5'-3' direction. This creates two antiparallel DNA single strands (ssDNA). The leading ssDNA polymer is the template for DNA polymerase III holoenzyme which synthesizes a continuous strand.. The catalysed reaction is ATP + H2O = ADP + phosphate + H(+). DNA-dependent ATPase and 5'-3' DNA helicase required for the maintenance of mitochondrial (kinetoplast) genome stability. Involved in processing of minicircle Okazaki fragments. This Trypanosoma brucei brucei (strain 927/4 GUTat10.1) protein is ATP-dependent DNA helicase PIF5.